The sequence spans 350 residues: MVSSDAYVEGLAAKLALDLLRVYTPTGSEERLYPVLERWASELGLGFSLDSAGNAVLSAGPDGLPVVGLVGHLDTVPGRLEARLEGYTLWGRGAVDAKGPLAAMILGLHLASSEGLSCSSAVLGLVGEEGDSPGAWSLVSRGDTPLHIIVGEPTGGDGVAIGYRGSLTIEIECTGHEGHSSNPERGAADMLVKALASILERDSRATVTRLKAGTAANITPGRALATVNMRFNEPGLEALQLASELCSSLHQHRCHCSSISLLHPVKTSLSNATARALVASLRTAGVKPRIVVKRGTSDMNVLSIATESIAAYGPGDPRLSHTKHENIRVGDIVKAAMIYSRTLTILCNSL.

Histidine 72 contacts Zn(2+). Aspartate 74 is an active-site residue. Aspartate 96 is a Zn(2+) binding site. Glutamate 128 (proton acceptor) is an active-site residue. The Zn(2+) site is built by glutamate 129, glutamate 152, and histidine 321.

The protein belongs to the peptidase M20A family. LysK subfamily. Requires Zn(2+) as cofactor. The cofactor is Co(2+).

Its subcellular location is the cytoplasm. The enzyme catalyses [amino-group carrier protein]-C-terminal-gamma-(L-lysyl)-L-glutamate + H2O = [amino-group carrier protein]-C-terminal-L-glutamate + L-lysine. It catalyses the reaction [amino-group carrier protein]-C-terminal-gamma-(L-ornithyl)-L-glutamate + H2O = [amino-group carrier protein]-C-terminal-L-glutamate + L-ornithine. Its pathway is amino-acid biosynthesis; L-lysine biosynthesis via AAA pathway; L-lysine from L-alpha-aminoadipate (Thermus route): step 5/5. It functions in the pathway amino-acid biosynthesis; L-arginine biosynthesis. In terms of biological role, catalyzes the release of L-lysine from [LysW]-gamma-L-lysine and the release of L-ornithine from [LysW]-L-ornithine. This Aeropyrum pernix (strain ATCC 700893 / DSM 11879 / JCM 9820 / NBRC 100138 / K1) protein is Putative [LysW]-lysine/[LysW]-ornithine hydrolase.